We begin with the raw amino-acid sequence, 344 residues long: Cell adhesion molecule CEACAM6 (344 aa).

The N-terminal stretch at 1–34 is a signal peptide; the sequence is MGPPSAPPCRLHVPWKEVLLTASLLTFWNPPTTA. Residues 35–142 enclose the Ig-like V-type domain; it reads KLTIESTPFN…EATGQFHVYP (108 aa). Residues asparagine 104, asparagine 111, asparagine 115, asparagine 152, asparagine 173, asparagine 197, asparagine 224, asparagine 256, asparagine 274, asparagine 288, asparagine 292, and asparagine 309 are each glycosylated (N-linked (GlcNAc...) asparagine). 2 consecutive Ig-like C2-type domains span residues 145–232 and 240–314; these read PKPS…VTLN and PTIS…TTVT. A disulfide bond links cysteine 167 and cysteine 215. Cysteine 259 and cysteine 299 are oxidised to a cystine. Glycine 320 carries the GPI-anchor amidated glycine lipid modification. The propeptide at 321–344 is removed in mature form; the sequence is SAPVLSAVATVGITIGVLARVALI.

It belongs to the immunoglobulin superfamily. CEA family. In terms of assembly, homodimer; homodimerizes via its Ig-like V-type domain. Heterodimer with CEACAM8; heterodimerizes via its Ig-like V-type domain. In terms of processing, glycosylated. As to expression, expressed in neutrophils. Expressed in columnar epithelial and goblet cells of the colon. Expressed in numerous tumor cell lines (at protein level).

The protein localises to the cell membrane. The protein resides in the apical cell membrane. It is found in the cell surface. Its function is as follows. Cell surface glycoprotein that plays a role in cell adhesion and tumor progression. Intercellular adhesion occurs in a calcium- and fibronectin-independent manner. Mediates homophilic and heterophilic cell adhesion with other carcinoembryonic antigen-related cell adhesion molecules, such as CEACAM5 and CEACAM8. Heterophilic interaction with CEACAM8 occurs in activated neutrophils. Plays a role in neutrophil adhesion to cytokine-activated endothelial cells. Plays a role in cell migration and cell adhesion to endothelial cells. This Homo sapiens (Human) protein is Cell adhesion molecule CEACAM6.